The chain runs to 376 residues: Cyclin-dependent kinase 9-B (376 aa).

In terms of domain architecture, Protein kinase spans 19–319; it reads YERLAKIGQG…SDEALNHDFF (301 aa). Residues 25-33 and K48 contribute to the ATP site; that span reads IGQGTFGEV. The active-site Proton acceptor is D153. The interval 345-376 is disordered; that stretch reads PPRRRGGHMPQQPANQARNPAATNQSEFDRVF. The segment covering 354–369 has biased composition (low complexity); that stretch reads PQQPANQARNPAATNQ.

Belongs to the protein kinase superfamily. CMGC Ser/Thr protein kinase family. CDC2/CDKX subfamily. Associates with cyclin-T to form P-TEFb.

Its subcellular location is the nucleus. The catalysed reaction is L-seryl-[protein] + ATP = O-phospho-L-seryl-[protein] + ADP + H(+). The enzyme catalyses L-threonyl-[protein] + ATP = O-phospho-L-threonyl-[protein] + ADP + H(+). It carries out the reaction [DNA-directed RNA polymerase] + ATP = phospho-[DNA-directed RNA polymerase] + ADP + H(+). Its function is as follows. Member of the cyclin-dependent kinase pair (CDK9/cyclin-T) complex, also called positive transcription elongation factor B (P-TEFb), which is proposed to facilitate the transition from abortive to production elongation by phosphorylating the CTD (C-terminal domain) of the large subunit of RNA polymerase II (RNAP II) and SUPT5H. The polypeptide is Cyclin-dependent kinase 9-B (cdk9-b) (Xenopus laevis (African clawed frog)).